The following is a 620-amino-acid chain: Chaperone protein HscA homolog (620 aa).

Belongs to the heat shock protein 70 family.

In terms of biological role, chaperone involved in the maturation of iron-sulfur cluster-containing proteins. Has a low intrinsic ATPase activity which is markedly stimulated by HscB. The chain is Chaperone protein HscA homolog from Pseudomonas entomophila (strain L48).